Here is a 231-residue protein sequence, read N- to C-terminus: Uracil-DNA glycosylase (231 aa).

The active-site Proton acceptor is Asp-74.

This sequence belongs to the uracil-DNA glycosylase (UDG) superfamily. UNG family.

Its subcellular location is the cytoplasm. It carries out the reaction Hydrolyzes single-stranded DNA or mismatched double-stranded DNA and polynucleotides, releasing free uracil.. Its function is as follows. Excises uracil residues from the DNA which can arise as a result of misincorporation of dUMP residues by DNA polymerase or due to deamination of cytosine. In Campylobacter jejuni (strain RM1221), this protein is Uracil-DNA glycosylase.